Reading from the N-terminus, the 249-residue chain is MVLRRDFLTWCNETLQTALFKDYAPNGLQVEGREYIGKIVTSVTASRAAIDFAVEQKADLLLVHHGMFWKNELPTVTGWKKERIAALLRHDINMAGYHLPLDAHPTLGNNAQLADRLGFATEKRFGEQNLLNSGSLKQAKTLGALAAHIETVLQRKPVVIGKPEREIRRVAWCSGGAQGFFQTAIDEGVDLYLTGEISEAQYHLANETGTAFISAGHHATERYGVRALAESAAEVFGLEVCHFDENNPA.

5 residues coordinate a divalent metal cation: histidine 64, histidine 65, aspartate 102, histidine 217, and glutamate 221.

It belongs to the GTP cyclohydrolase I type 2/NIF3 family. In terms of assembly, homohexamer.

In Neisseria meningitidis serogroup A / serotype 4A (strain DSM 15465 / Z2491), this protein is GTP cyclohydrolase 1 type 2 homolog.